Here is a 705-residue protein sequence, read N- to C-terminus: Elongation factor G (705 aa).

One can recognise a tr-type G domain in the interval 8-290 (EKYRNIGICA…GVVEYLPAPN (283 aa)). GTP is bound by residues 17–24 (AHVDAGKT), 88–92 (DTPGH), and 142–145 (NKMD).

The protein belongs to the TRAFAC class translation factor GTPase superfamily. Classic translation factor GTPase family. EF-G/EF-2 subfamily.

It is found in the cytoplasm. In terms of biological role, catalyzes the GTP-dependent ribosomal translocation step during translation elongation. During this step, the ribosome changes from the pre-translocational (PRE) to the post-translocational (POST) state as the newly formed A-site-bound peptidyl-tRNA and P-site-bound deacylated tRNA move to the P and E sites, respectively. Catalyzes the coordinated movement of the two tRNA molecules, the mRNA and conformational changes in the ribosome. The chain is Elongation factor G from Francisella philomiragia subsp. philomiragia (strain ATCC 25017 / CCUG 19701 / FSC 153 / O#319-036).